A 468-amino-acid chain; its full sequence is Glutamate--tRNA ligase 2 (468 aa).

Residues 9 to 19 (PSPTGFLHIGG) carry the 'HIGH' region motif. The 'KMSKS' region motif lies at 238-242 (KLSKR). Lys-241 is an ATP binding site.

The protein belongs to the class-I aminoacyl-tRNA synthetase family. Glutamate--tRNA ligase type 1 subfamily. Monomer.

The protein localises to the cytoplasm. The enzyme catalyses tRNA(Glu) + L-glutamate + ATP = L-glutamyl-tRNA(Glu) + AMP + diphosphate. In terms of biological role, catalyzes the attachment of glutamate to tRNA(Glu) in a two-step reaction: glutamate is first activated by ATP to form Glu-AMP and then transferred to the acceptor end of tRNA(Glu). In Rhodospirillum rubrum (strain ATCC 11170 / ATH 1.1.1 / DSM 467 / LMG 4362 / NCIMB 8255 / S1), this protein is Glutamate--tRNA ligase 2.